The chain runs to 350 residues: Transcription factor MYB102 (350 aa).

HTH myb-type domains are found at residues 9–65 (KNGL…RPDI) and 66–116 (KRGR…RKKL). 2 DNA-binding regions (H-T-H motif) span residues 37 to 61 (WRTL…TNYL) and 89 to 112 (WSAI…NTHI).

As to expression, expressed in rosette leaves, cauline leaves and flowers.

Its subcellular location is the nucleus. Its function is as follows. Probable transcription factor that may function in osmotic stress and wounding signaling pathways. Contributes to basal resistance against the herbivore Pieris rapae (white cabbage butterfly) feeding. In Arabidopsis thaliana (Mouse-ear cress), this protein is Transcription factor MYB102.